A 513-amino-acid polypeptide reads, in one-letter code: Cytochrome P450 monooxygenase ARMGADRAFT_1018418 (513 aa).

A helical transmembrane segment spans residues 1–21; that stretch reads MTHASSAWFLAAVVIVTFIVV. Cysteine 435 lines the heme pocket. A glycan (N-linked (GlcNAc...) asparagine) is linked at asparagine 442.

The protein belongs to the cytochrome P450 family. The cofactor is heme.

It localises to the membrane. It participates in secondary metabolite biosynthesis. Its function is as follows. Cytochrome P450 monooxygenase, part of the gene cluster that mediates the biosynthesis of melleolides, a range of antifungal and phytotoxic polyketide derivatives composed of an orsellinic acid (OA) moiety esterified to various sesquiterpene alcohols. The first step in melleolides biosynthesis is performed by the delta(6)-protoilludene synthase PRO1 which catalyzes the cyclization of farnesyl diphosphate to protoilludene. The orsellinic acid synthase armB produces OA by condensing acetyl-CoA with 3 malonyl-CoA units in a three-round chain elongation reaction folowed by a C2-C7 ring closure. ArmB further catalyzes the trans-esterification of OA to the various sesquiterpene alcohols resulting from the hydroxylation of protoilludene. The melleolides cluster also includes 5 cytochrome P450 monooxygenases, 4 NAD(+)-dependent oxidoreductases, one flavin-dependent oxidoreductase, and one O-methyltransferase. The cytochrome P450 monooxygenases may be involved in protoilludene hydroxylation to elaborate melleolides with multiple alcohol groups, such as melleolide D, which carries alcohol functionalities at C-4, C-5, C-10, and C-13. The role of the NAD(+)-dependent enzymes remains unknown. Numerous melleolides, including arnamial, show 5'-O-methylation of the aromatic moiety which may be catalyzed by the methyltransferase encoded in the cluster. The flavin-dependent oxidoreductase might represent the dehydrogenase yielding the aldehyde in position 1 of arnamial and other melleolides. Finally, several halogenase localized outside of the cluster, are able to catalyze the transfer of a single chlorine atom to the melleolide backbone, resulting in a 6'-chloromelleolide product. The chain is Cytochrome P450 monooxygenase ARMGADRAFT_1018418 from Armillaria gallica (Bulbous honey fungus).